The sequence spans 323 residues: ATP synthase gamma chain (323 aa).

The segment at P215–A237 is disordered. A compositionally biased stretch (basic and acidic residues) spans K221 to G230.

Belongs to the ATPase gamma chain family. As to quaternary structure, F-type ATPases have 2 components, CF(1) - the catalytic core - and CF(0) - the membrane proton channel. CF(1) has five subunits: alpha(3), beta(3), gamma(1), delta(1), epsilon(1). CF(0) has three main subunits: a, b and c.

The protein resides in the cell inner membrane. Its function is as follows. Produces ATP from ADP in the presence of a proton gradient across the membrane. The gamma chain is believed to be important in regulating ATPase activity and the flow of protons through the CF(0) complex. The sequence is that of ATP synthase gamma chain from Sorangium cellulosum (strain So ce56) (Polyangium cellulosum (strain So ce56)).